The following is a 244-amino-acid chain: 3-oxoacyl-[acyl-carrier-protein] reductase FabG (244 aa).

NADP(+) contacts are provided by residues 12–15 (GASR) and Thr-37. Residues Gly-50 and Gly-53 each coordinate Ca(2+). NADP(+)-binding positions include 59 to 60 (NV) and Asn-86. Ser-138 serves as a coordination point for substrate. Asn-145 is a Ca(2+) binding site. The active-site Proton acceptor is Tyr-151. Residues 151-155 (YAAAK) and Ile-184 contribute to the NADP(+) site. The Ca(2+) site is built by Glu-233 and Thr-234.

This sequence belongs to the short-chain dehydrogenases/reductases (SDR) family. As to quaternary structure, homotetramer.

The enzyme catalyses a (3R)-hydroxyacyl-[ACP] + NADP(+) = a 3-oxoacyl-[ACP] + NADPH + H(+). It carries out the reaction 3-oxobutanoyl-[ACP] + NADPH + H(+) = (3R)-hydroxybutanoyl-[ACP] + NADP(+). The catalysed reaction is 3-oxopentanoyl-[ACP] + NADPH + H(+) = (3R)-hydroxypentanoyl-[ACP] + NADP(+). It catalyses the reaction 3-oxohexanoyl-[ACP] + NADPH + H(+) = (3R)-hydroxyhexanoyl-[ACP] + NADP(+). The enzyme catalyses 3-oxoheptanoyl-[ACP] + NADPH + H(+) = (3R)-hydroxyheptanoyl-[ACP] + NADP(+). It carries out the reaction 3-oxooctanoyl-[ACP] + NADPH + H(+) = (3R)-hydroxyoctanoyl-[ACP] + NADP(+). The catalysed reaction is 3-oxononanoyl-[ACP] + NADPH + H(+) = (3R)-hydroxynonanoyl-[ACP] + NADP(+). It catalyses the reaction 3-oxodecanoyl-[ACP] + NADPH + H(+) = (3R)-hydroxydecanoyl-[ACP] + NADP(+). The enzyme catalyses 3-oxohexadecanoyl-[ACP] + NADPH + H(+) = (3R)-hydroxyhexadecanoyl-[ACP] + NADP(+). It carries out the reaction 3-oxo-(9Z)-hexadecenoyl-[ACP] + NADPH + H(+) = (3R)-hydroxy-(9Z)-hexadecenoyl-[ACP] + NADP(+). The catalysed reaction is 4-methyl-3-oxopentanoyl-[ACP] + NADPH + H(+) = (3R)-hydroxy-4-methylpentanoyl-[ACP] + NADP(+). It catalyses the reaction 5-methyl-3-oxohexanoyl-[ACP] + NADPH + H(+) = (3R)-hydroxy-5-methylhexanoyl-[ACP] + NADP(+). The enzyme catalyses 4-methyl-3-oxohexanoyl-[ACP] + NADPH + H(+) = (3R)-hydroxy-4-methylhexanoyl-[ACP] + NADP(+). It functions in the pathway lipid metabolism; fatty acid biosynthesis. Its activity is regulated as follows. Inhibited by cinnamic acid derivatives. Catalyzes the NADPH-dependent reduction of beta-ketoacyl-ACP substrates to beta-hydroxyacyl-ACP products, the first reductive step in the elongation cycle of fatty acid biosynthesis. This chain is 3-oxoacyl-[acyl-carrier-protein] reductase FabG (fabG), found in Escherichia coli (strain K12).